We begin with the raw amino-acid sequence, 72 residues long: DNA-directed RNA polymerase subunit omega (72 aa).

This sequence belongs to the RNA polymerase subunit omega family. The RNAP catalytic core consists of 2 alpha, 1 beta, 1 beta' and 1 omega subunit. When a sigma factor is associated with the core the holoenzyme is formed, which can initiate transcription.

It catalyses the reaction RNA(n) + a ribonucleoside 5'-triphosphate = RNA(n+1) + diphosphate. Promotes RNA polymerase assembly. Latches the N- and C-terminal regions of the beta' subunit thereby facilitating its interaction with the beta and alpha subunits. In Limosilactobacillus reuteri (strain DSM 20016) (Lactobacillus reuteri), this protein is DNA-directed RNA polymerase subunit omega.